The primary structure comprises 258 residues: Electron transfer flavoprotein beta subunit lysine methyltransferase (258 aa).

The protein belongs to the methyltransferase superfamily. ETFBKMT family.

The protein localises to the cytoplasm. The protein resides in the mitochondrion matrix. It catalyses the reaction L-lysyl-[protein] + 3 S-adenosyl-L-methionine = N(6),N(6),N(6)-trimethyl-L-lysyl-[protein] + 3 S-adenosyl-L-homocysteine + 3 H(+). In terms of biological role, protein-lysine methyltransferase that selectively trimethylates the flavoprotein ETFB in mitochondria. Thereby, may negatively regulate the function of ETFB in electron transfer from Acyl-CoA dehydrogenases to the main respiratory chain. This Danio rerio (Zebrafish) protein is Electron transfer flavoprotein beta subunit lysine methyltransferase.